Here is a 687-residue protein sequence, read N- to C-terminus: T-box transcription factor TBX2b (687 aa).

Residues 103-276 (LWDQFHKLGT…NNPFAKGFRD (174 aa)) constitute a DNA-binding region (T-box). Disordered regions lie at residues 303 to 452 (DRDG…ESPS) and 611 to 687 (NLLT…DSPK). Basic and acidic residues-rich tracts occupy residues 338–357 (GSRD…HQND), 375–400 (SRSE…RKTS), and 408–430 (NLEK…KDTE). Polar residues-rich tracts occupy residues 431–451 (NSGI…TESP), 611–630 (NLLT…SSKC), and 644–654 (GASQRNGSPKT). Residues 654 to 681 (TTMKESINELQNIQRLVSGLESQRETSS) adopt a coiled-coil conformation. The span at 675 to 687 (SQRETSSPRDSPK) shows a compositional bias: basic and acidic residues.

As to quaternary structure, binds DNA as a monomer. Expressed in the axial mesoderm, notably, in the notochordal precursor cells immediately before formation of the notochord and in the chordoneural hinge of the tail bud, after the notochord is formed. In addition, its expression is detected in the ventral forebrain, sensory neurons, fin buds and excretory system.

The protein resides in the nucleus. Transcription factor which acts as a transcriptional repressor. May also function as a transcriptional activator. Binds to the palindromic T site 5'-TTCACACCTAGGTGTGAA-3' DNA sequence, or a half-site, which are present in the regulatory region of several genes. Involved in the transcriptional regulation of genes required for mesoderm differentiation. Plays a role in the specification of late notochordal precursor cells and formation of the differentiated notochord. Required for cardiac atrioventricular canal formation. The sequence is that of T-box transcription factor TBX2b (tbx2b) from Danio rerio (Zebrafish).